The following is a 559-amino-acid chain: ADP,ATP carrier protein 1 (559 aa).

Over residues 1 to 10 (MNEVENNNHS) the composition is skewed to polar residues. Residues 1-22 (MNEVENNNHSFPREDIPTEDEI) form a disordered region. Asparagine 8 carries an N-linked (GlcNAc...) asparagine glycan. 4 helical membrane passes run 46–66 (FALL…MRIL), 79–99 (TILF…VFLI), 111–131 (IFSI…AVFL), and 174–194 (IVFI…FLSF). Asparagine 196 is a glycosylation site (N-linked (GlcNAc...) asparagine). The next 2 helical transmembrane spans lie at 210–230 (PLII…GAFF) and 242–262 (QVLL…VIFL). N-linked (GlcNAc...) asparagine glycosylation is present at asparagine 290. Helical transmembrane passes span 305 to 325 (LLLA…MVES), 354 to 373 (QYMT…SSYV), and 377 to 397 (GFLL…VLFL). Asparagine 403 carries N-linked (GlcNAc...) asparagine glycosylation. The next 3 helical transmembrane spans lie at 425-447 (YVLE…YSAF), 473-493 (IFGK…FEAL), and 503-523 (PITA…IIYL).

Belongs to the ADP/ATP translocase tlc family.

Its subcellular location is the cell membrane. Its function is as follows. ATP transporter involved in the uptake of ATP from the host cell cytoplasm. Provides the microsporidian cell with host ATP in exchange for ADP. This is an obligate exchange system. This energy acquiring activity is an important component of microsporidian parasitism. The polypeptide is ADP,ATP carrier protein 1 (NTT1) (Encephalitozoon cuniculi (strain GB-M1) (Microsporidian parasite)).